A 176-amino-acid polypeptide reads, in one-letter code: Nascent polypeptide-associated complex subunit alpha (176 aa).

Residues 14–78 (SKNEKKAREL…AKVDDFTQRL (65 aa)) form the NAC-A/B domain. Positions 85–127 (LQQNEGVLPAGQDAVSKDPQSIQADMQAAADSATDKPSADDAV) are disordered. In terms of domain architecture, UBA spans 137–176 (LNADDIELVMQQAGVPRAKAAKALKEHDSDIVNAIMALSG).

This sequence belongs to the NAC-alpha family. Part of the nascent polypeptide-associated complex (NAC), consisting of EGD2 and EGD1. NAC associates with ribosomes via EGD1.

The protein localises to the cytoplasm. The protein resides in the nucleus. Component of the nascent polypeptide-associated complex (NAC), a dynamic component of the ribosomal exit tunnel, protecting the emerging polypeptides from interaction with other cytoplasmic proteins to ensure appropriate nascent protein targeting. The NAC complex also promotes mitochondrial protein import by enhancing productive ribosome interactions with the outer mitochondrial membrane and blocks the inappropriate interaction of ribosomes translating non-secretory nascent polypeptides with translocation sites in the membrane of the endoplasmic reticulum. EGD2 may also be involved in transcription regulation. In Kluyveromyces lactis (strain ATCC 8585 / CBS 2359 / DSM 70799 / NBRC 1267 / NRRL Y-1140 / WM37) (Yeast), this protein is Nascent polypeptide-associated complex subunit alpha (EGD2).